The chain runs to 421 residues: Enolase 1 (421 aa).

Glutamine 164 contributes to the (2R)-2-phosphoglycerate binding site. The active-site Proton donor is glutamate 206. Positions 243, 287, and 314 each coordinate Mg(2+). 4 residues coordinate (2R)-2-phosphoglycerate: lysine 339, arginine 368, serine 369, and lysine 390. Catalysis depends on lysine 339, which acts as the Proton acceptor.

Belongs to the enolase family. Component of the RNA degradosome, a multiprotein complex involved in RNA processing and mRNA degradation. Mg(2+) is required as a cofactor.

It is found in the cytoplasm. Its subcellular location is the secreted. The protein resides in the cell surface. The catalysed reaction is (2R)-2-phosphoglycerate = phosphoenolpyruvate + H2O. Its pathway is carbohydrate degradation; glycolysis; pyruvate from D-glyceraldehyde 3-phosphate: step 4/5. Functionally, catalyzes the reversible conversion of 2-phosphoglycerate (2-PG) into phosphoenolpyruvate (PEP). It is essential for the degradation of carbohydrates via glycolysis. This Methylococcus capsulatus (strain ATCC 33009 / NCIMB 11132 / Bath) protein is Enolase 1.